We begin with the raw amino-acid sequence, 190 residues long: Orotate phosphoribosyltransferase (190 aa).

114 to 122 contributes to the 5-phospho-alpha-D-ribose 1-diphosphate binding site; the sequence is EDVVTTGGS. Thr-118 and Arg-146 together coordinate orotate.

This sequence belongs to the purine/pyrimidine phosphoribosyltransferase family. PyrE subfamily. In terms of assembly, homodimer. It depends on Mg(2+) as a cofactor.

The catalysed reaction is orotidine 5'-phosphate + diphosphate = orotate + 5-phospho-alpha-D-ribose 1-diphosphate. The protein operates within pyrimidine metabolism; UMP biosynthesis via de novo pathway; UMP from orotate: step 1/2. Functionally, catalyzes the transfer of a ribosyl phosphate group from 5-phosphoribose 1-diphosphate to orotate, leading to the formation of orotidine monophosphate (OMP). This chain is Orotate phosphoribosyltransferase, found in Thermoanaerobacter sp. (strain X514).